Consider the following 342-residue polypeptide: Succinylglutamate desuccinylase (342 aa).

3 residues coordinate Zn(2+): H63, E66, and H155. The active site involves E219.

Belongs to the AspA/AstE family. Succinylglutamate desuccinylase subfamily. Zn(2+) serves as cofactor.

The enzyme catalyses N-succinyl-L-glutamate + H2O = L-glutamate + succinate. The protein operates within amino-acid degradation; L-arginine degradation via AST pathway; L-glutamate and succinate from L-arginine: step 5/5. Functionally, transforms N(2)-succinylglutamate into succinate and glutamate. This Vibrio parahaemolyticus serotype O3:K6 (strain RIMD 2210633) protein is Succinylglutamate desuccinylase.